We begin with the raw amino-acid sequence, 67 residues long: UPF0519 protein C (67 aa).

The segment at 18–37 is disordered; it reads KSQANLNSNSTNSPNNVQGL. A compositionally biased stretch (low complexity) spans 22–33; it reads NLNSNSTNSPNN.

Belongs to the UPF0519 family.

The protein is UPF0519 protein C of Dictyostelium discoideum (Social amoeba).